Consider the following 162-residue polypeptide: Protein lon-8 (162 aa).

Positions 1 to 23 (MRNSRFCAILAVISAISVSYVLA) are cleaved as a signal peptide.

The protein resides in the secreted. Secreted protein that is involved in larval elongation, early adult growth and male tail development. The protein is Protein lon-8 of Caenorhabditis elegans.